A 1060-amino-acid polypeptide reads, in one-letter code: Isoleucine--tRNA ligase (1060 aa).

Positions 55-65 match the 'HIGH' region motif; that stretch reads PTANGTPGVHH. Positions 608 to 612 match the 'KMSKS' region motif; sequence KMSKH. K611 contributes to the ATP binding site.

The protein belongs to the class-I aminoacyl-tRNA synthetase family. IleS type 2 subfamily. As to quaternary structure, monomer. Requires Zn(2+) as cofactor.

It is found in the cytoplasm. It carries out the reaction tRNA(Ile) + L-isoleucine + ATP = L-isoleucyl-tRNA(Ile) + AMP + diphosphate. In terms of biological role, catalyzes the attachment of isoleucine to tRNA(Ile). As IleRS can inadvertently accommodate and process structurally similar amino acids such as valine, to avoid such errors it has two additional distinct tRNA(Ile)-dependent editing activities. One activity is designated as 'pretransfer' editing and involves the hydrolysis of activated Val-AMP. The other activity is designated 'posttransfer' editing and involves deacylation of mischarged Val-tRNA(Ile). This Thermobifida fusca (strain YX) protein is Isoleucine--tRNA ligase.